Here is a 198-residue protein sequence, read N- to C-terminus: Superoxide dismutase [Fe] (198 aa).

Fe cation-binding residues include H27, H74, D158, and H162.

Belongs to the iron/manganese superoxide dismutase family. Homodimer. Requires Fe cation as cofactor.

The protein localises to the cytoplasm. The enzyme catalyses 2 superoxide + 2 H(+) = H2O2 + O2. Destroys superoxide anion radicals which are normally produced within the cells and which are toxic to biological systems. The sequence is that of Superoxide dismutase [Fe] (SODB) from Plasmodium falciparum (isolate 3D7).